A 357-amino-acid chain; its full sequence is Dihydroorotate dehydrogenase (quinone) (357 aa).

FMN-binding positions include 65–69 and Thr-89; that span reads AGLDK. Lys-69 serves as a coordination point for substrate. 114-118 contributes to the substrate binding site; that stretch reads NRFGF. FMN is bound by residues Asn-156 and Asn-189. Asn-189 serves as a coordination point for substrate. Ser-192 serves as the catalytic Nucleophile. Residue Asn-194 participates in substrate binding. Residues Lys-234 and Thr-262 each coordinate FMN. 263–264 is a binding site for substrate; the sequence is NT. FMN-binding positions include Gly-285, Gly-314, and 335–336; that span reads YT.

Belongs to the dihydroorotate dehydrogenase family. Type 2 subfamily. In terms of assembly, monomer. FMN serves as cofactor.

It localises to the cell membrane. The catalysed reaction is (S)-dihydroorotate + a quinone = orotate + a quinol. The protein operates within pyrimidine metabolism; UMP biosynthesis via de novo pathway; orotate from (S)-dihydroorotate (quinone route): step 1/1. In terms of biological role, catalyzes the conversion of dihydroorotate to orotate with quinone as electron acceptor. The protein is Dihydroorotate dehydrogenase (quinone) of Albidiferax ferrireducens (strain ATCC BAA-621 / DSM 15236 / T118) (Rhodoferax ferrireducens).